The primary structure comprises 216 residues: 3-isopropylmalate dehydratase small subunit (216 aa).

The protein belongs to the LeuD family. LeuD type 1 subfamily. Heterodimer of LeuC and LeuD.

The enzyme catalyses (2R,3S)-3-isopropylmalate = (2S)-2-isopropylmalate. It participates in amino-acid biosynthesis; L-leucine biosynthesis; L-leucine from 3-methyl-2-oxobutanoate: step 2/4. Catalyzes the isomerization between 2-isopropylmalate and 3-isopropylmalate, via the formation of 2-isopropylmaleate. This chain is 3-isopropylmalate dehydratase small subunit, found in Cupriavidus pinatubonensis (strain JMP 134 / LMG 1197) (Cupriavidus necator (strain JMP 134)).